A 364-amino-acid polypeptide reads, in one-letter code: mRNA decay activator protein ZFP36L2-B (364 aa).

Basic and acidic residues predominate over residues 102 to 111 (SFSENGERSQ). The disordered stretch occupies residues 102–129 (SFSENGERSQHLLHLQQQQQQQKAGAQV). A compositionally biased stretch (low complexity) spans 113-123 (LLHLQQQQQQQ). The RNA-binding motif lies at 133 to 138 (RYKTEL). 2 C3H1-type zinc fingers span residues 133-161 (RYKTELCRPFEENGACKYGEKCQFAHGFH) and 171-199 (KYKTELCRTFHTIGFCPYGPRCHFIHNAE). The tract at residues 150 to 191 (YGEKCQFAHGFHELRSLTRHPKYKTELCRTFHTIGFCPYGPR) is RNA-binding. Residues 308-350 (SESPVFDAPPSPPDSLSDRDSYLSGSLSSGSLSGSDSPTLDSN) are disordered. Low complexity predominate over residues 329–348 (YLSGSLSSGSLSGSDSPTLD).

Post-translationally, phosphorylated. Remains unlocalized in the egg and early embryo. From stage 21 (late neurula), expressed around the pronephros in the anterior crests, pharyngeal arch, hindbrain, mesodermal tissues around the pronephros and tail-bud. This expression pattern is maintained up to the tadpole stage.

It localises to the nucleus. The protein resides in the cytoplasm. Functionally, zinc-finger RNA-binding protein that destabilizes several cytoplasmic AU-rich element (ARE)-containing mRNA transcripts by promoting their poly(A) tail removal or deadenylation, and hence provide a mechanism for attenuating protein synthesis. Acts as a 3'-untranslated region (UTR) ARE mRNA-binding adapter protein to communicate signaling events to the mRNA decay machinery. Functions by recruiting the CCR4-NOT deadenylase complex and probably other components of the cytoplasmic RNA decay machinery to the bound ARE-containing mRNAs, and hence promotes ARE-mediated mRNA deadenylation and decay processes. Binds to 3'-UTR ARE of numerous mRNAs. Also induces the degradation of ARE-containing mRNAs even in absence of poly(A) tail. Required for tubulogenesis during pronephros development. The polypeptide is mRNA decay activator protein ZFP36L2-B (zfp36l2-B) (Xenopus laevis (African clawed frog)).